Reading from the N-terminus, the 1023-residue chain is Presequence protease, mitochondrial (1023 aa).

The N-terminal 62 residues, 1 to 62 (MFRQSKTIIT…PDLFLTAVKL (62 aa)), are a transit peptide targeting the mitochondrion. Residue His-99 coordinates Zn(2+). Glu-102 functions as the Proton acceptor in the catalytic mechanism. His-103 and Glu-200 together coordinate Zn(2+). Cys-114 and Cys-551 are oxidised to a cystine.

It belongs to the peptidase M16 family. PreP subfamily. In terms of assembly, monomer and homodimer; homodimerization is induced by binding of the substrate. The cofactor is Zn(2+). In terms of processing, a disulfide bond locks the enzyme in the closed conformation preventing substrate entry into the catalytic chamber.

It localises to the mitochondrion matrix. Mainly exists in a closed and catalytically competent conformation but a closed-to-open switch allows substrate entry into the catalytic chamber. Substrate binding induces closure and dimerization. A disulfide bond may lock the enzyme in a closed conformation preventing substrate entry into the catalytic chamber, participating in redox regulation of the enzyme. Inhibited by metal-chelating agents. Inhibited by nickel and zinc excess, and slightly activated by manganese. Functionally, metalloendopeptidase of the mitochondrial matrix that functions in peptide cleavage and degradation rather than in protein processing. Has an ATP-independent activity. Specifically cleaves peptides in the range of 5 to 65 residues. Shows a preference for cleavage after small polar residues and before basic residues, but without any positional preference. Degrades the transit peptides of mitochondrial proteins after their cleavage. Also degrades other unstructured peptides. The chain is Presequence protease, mitochondrial (pitrm1) from Danio rerio (Zebrafish).